The chain runs to 166 residues: Nucleotide-binding protein SUN_0226 (166 aa).

It belongs to the YajQ family.

Functionally, nucleotide-binding protein. In Sulfurovum sp. (strain NBC37-1), this protein is Nucleotide-binding protein SUN_0226.